Consider the following 354-residue polypeptide: Protein-arginine kinase (354 aa).

The Phosphagen kinase C-terminal domain occupies 24-254 (IVLSSRIRLA…QQIIQQEKLA (231 aa)). ATP-binding positions include 27–31 (SSRIR), histidine 92, arginine 125, 176–180 (RASVM), and 207–212 (RGIYGE). An RDXXRA motif of the pArg binding pocket involved in allosteric regulation motif is present at residues 337–342 (RDYRRA).

This sequence belongs to the ATP:guanido phosphotransferase family.

The enzyme catalyses L-arginyl-[protein] + ATP = N(omega)-phospho-L-arginyl-[protein] + ADP + H(+). With respect to regulation, appears to be allosterically activated by the binding of pArg-containing polypeptides to the pArg-binding pocket localized in the C-terminal domain of McsB. Catalyzes the specific phosphorylation of arginine residues in a large number of proteins. Is part of the bacterial stress response system. Protein arginine phosphorylation has a physiologically important role and is involved in the regulation of many critical cellular processes, such as protein homeostasis, motility, competence, and stringent and stress responses, by regulating gene expression and protein activity. In Bacillus cereus (strain B4264), this protein is Protein-arginine kinase.